Consider the following 176-residue polypeptide: Large ribosomal subunit protein uL6 (176 aa).

This sequence belongs to the universal ribosomal protein uL6 family. As to quaternary structure, part of the 50S ribosomal subunit.

This protein binds to the 23S rRNA, and is important in its secondary structure. It is located near the subunit interface in the base of the L7/L12 stalk, and near the tRNA binding site of the peptidyltransferase center. This chain is Large ribosomal subunit protein uL6, found in Burkholderia cenocepacia (strain HI2424).